The following is a 145-amino-acid chain: Ubiquitin-conjugating enzyme E2 variant 1C (145 aa).

Residues 12-145 (PRNFRLLEEL…LVQPPEGTFF (134 aa)) form the UBC core domain.

Belongs to the ubiquitin-conjugating enzyme family. In terms of assembly, heterodimer with UBC35 or UBC36. In terms of tissue distribution, expressed in roots, shoots, leaves, stems and flowers, but not in pollen.

Functionally, has no ubiquitin ligase activity on its own. The heterodimer with UBC catalyzes the synthesis of non-canonical poly-ubiquitin chains that are linked through 'Lys-63'. This type of poly-ubiquitination does not lead to protein degradation by the proteasome. Mediates transcriptional activation of target genes. May play a role in the control of progress through the cell cycle and differentiation. May play a role in the error-free DNA repair pathway and contributes to the survival of cells after DNA damage. The protein is Ubiquitin-conjugating enzyme E2 variant 1C (UEV1C) of Arabidopsis thaliana (Mouse-ear cress).